A 301-amino-acid polypeptide reads, in one-letter code: Syntaxin-17 (301 aa).

Position 2 is an N-acetylserine (S2). The Cytoplasmic segment spans residues 2 to 227 (SEDEEKVKLR…KNLQKAAKYK (226 aa)). At K41 the chain carries N6-acetyllysine. The stretch at 49 to 128 (DKLHEEHINA…QVNDEELLQP (80 aa)) forms a coiled coil. A Phosphotyrosine; by ABL1 modification is found at Y156. A t-SNARE coiled-coil homology domain is found at 161–223 (IPQDQNAAES…EEGTKNLQKA (63 aa)). Residues 228–248 (LAALPVAGALIGGVVGGPIGL) traverse the membrane as a helical segment. Positions 228 to 274 (LAALPVAGALIGGVVGGPIGLLAGFKVAGIAAALGGGVLGFTGGKLI) are necessary and sufficient for localization to autophagosome. Over 249-253 (LAGFK) the chain is Lumenal. A helical membrane pass occupies residues 254–274 (VAGIAAALGGGVLGFTGGKLI). Over 275–301 (QRRKQKMMEKLTSSCPDLPSQSDKKRS) the chain is Cytoplasmic. At S288 the chain carries Phosphoserine. The Endoplasmic reticulum retention signal motif lies at 298-301 (KKRS).

The protein belongs to the syntaxin family. In terms of assembly, forms a SNARE complex composed of VAMP8, SNAP29 and STX17 involved in fusion of autophagosome with lysosome. May interact with VTI1B. Probably interacts with BET1, SCFD1 and SEC22B. Interacts with PTPN2 and ABL1; involved in STX17 phosphorylation. Interacts with COPB1. Interacts with TMED9 and TMED10; the interaction is direct. Interacts with VAMP7. Interacts with RUBCNL/PACER; promoting targeting of RUBCNL/PACER to autophagosome. Interacts with VAMP8, SNAP29, VPS39 and VPS41; these interactions are increased in the absence of TMEM39A. Interacts with IRGM; promoting STX17 recruitment to autophagosomes. Interacts with ATG8 proteins GABARAP and MAP1LC3B. Interacts with RNF115; this interaction enhances STX17 stability which in turn promotes autophagosome maturation. Interacts with RAB39A (GTP-bound); the interaction promotes autophagosome-lysosome membrane fusion driven by STX17-SNAP29-VAMP8. Interacts with RAB39B; the interaction may promote a different fonction in autophagy as compared with RAB39A. Dephosphorylation by PTPN2; regulates exit from the endoplasmic reticulum. Phosphorylated at Tyr-156 probably by ABL1.

The protein resides in the endoplasmic reticulum membrane. It is found in the smooth endoplasmic reticulum membrane. Its subcellular location is the endoplasmic reticulum-Golgi intermediate compartment membrane. The protein localises to the cytoplasmic vesicle. It localises to the autophagosome membrane. The protein resides in the COPII-coated vesicle membrane. It is found in the cytoplasm. Its subcellular location is the cytosol. The protein localises to the mitochondrion membrane. It localises to the autolysosome membrane. In terms of biological role, SNAREs, soluble N-ethylmaleimide-sensitive factor-attachment protein receptors, are essential proteins for fusion of cellular membranes. SNAREs localized on opposing membranes assemble to form a trans-SNARE complex, an extended, parallel four alpha-helical bundle that drives membrane fusion. STX17 is a SNARE of the autophagosome involved in autophagy through the direct control of autophagosome membrane fusion with the lysosome membrane. May also play a role in the early secretory pathway where it may maintain the architecture of the endoplasmic reticulum-Golgi intermediate compartment/ERGIC and Golgi and/or regulate transport between the endoplasmic reticulum, the ERGIC and the Golgi. This is Syntaxin-17 from Mus musculus (Mouse).